Consider the following 143-residue polypeptide: MAEAARQELENQLRQTIETLVEISLLVHDTTGSQENKEGLIEQMDTLVKEFQRLKEIKCDKQIPIDVIDYIDQGRNPDVYTREFVELLLKQNQFIHGKMDIYTVSKGVRESTSDDIPLDISCGAHSNTEISTNPGQKRQGNVS.

Residues 123–143 are disordered; it reads GAHSNTEISTNPGQKRQGNVS. A compositionally biased stretch (polar residues) spans 124–143; the sequence is AHSNTEISTNPGQKRQGNVS.

This sequence belongs to the Mediator complex subunit 10 family. As to quaternary structure, component of the Mediator complex.

It localises to the nucleus. Functionally, component of the Mediator complex, a coactivator involved in the regulated transcription of nearly all RNA polymerase II-dependent genes. Mediator functions as a bridge to convey information from gene-specific regulatory proteins to the basal RNA polymerase II transcription machinery. Mediator is recruited to promoters by direct interactions with regulatory proteins and serves as a scaffold for the assembly of a functional preinitiation complex with RNA polymerase II and the general transcription factors. The polypeptide is Mediator of RNA polymerase II transcription subunit 10 (NUT2) (Yarrowia lipolytica (strain CLIB 122 / E 150) (Yeast)).